Reading from the N-terminus, the 504-residue chain is ATP synthase subunit alpha, chloroplastic (504 aa).

An ATP-binding site is contributed by 170-177 (GDRQTGKT).

It belongs to the ATPase alpha/beta chains family. In terms of assembly, F-type ATPases have 2 components, CF(1) - the catalytic core - and CF(0) - the membrane proton channel. CF(1) has five subunits: alpha(3), beta(3), gamma(1), delta(1), epsilon(1). CF(0) has four main subunits: a, b, b' and c.

The protein localises to the plastid. Its subcellular location is the chloroplast thylakoid membrane. The catalysed reaction is ATP + H2O + 4 H(+)(in) = ADP + phosphate + 5 H(+)(out). In terms of biological role, produces ATP from ADP in the presence of a proton gradient across the membrane. The alpha chain is a regulatory subunit. The sequence is that of ATP synthase subunit alpha, chloroplastic from Ostreococcus tauri.